Consider the following 263-residue polypeptide: 3-deoxy-manno-octulosonate cytidylyltransferase (263 aa).

It belongs to the KdsB family.

The protein localises to the cytoplasm. The enzyme catalyses 3-deoxy-alpha-D-manno-oct-2-ulosonate + CTP = CMP-3-deoxy-beta-D-manno-octulosonate + diphosphate. The protein operates within nucleotide-sugar biosynthesis; CMP-3-deoxy-D-manno-octulosonate biosynthesis; CMP-3-deoxy-D-manno-octulosonate from 3-deoxy-D-manno-octulosonate and CTP: step 1/1. Its pathway is bacterial outer membrane biogenesis; lipopolysaccharide biosynthesis. Activates KDO (a required 8-carbon sugar) for incorporation into bacterial lipopolysaccharide in Gram-negative bacteria. The polypeptide is 3-deoxy-manno-octulosonate cytidylyltransferase (Burkholderia vietnamiensis (strain G4 / LMG 22486) (Burkholderia cepacia (strain R1808))).